Here is a 476-residue protein sequence, read N- to C-terminus: Lipase (476 aa).

The signal sequence occupies residues 1-23 (MGIFDYKNLGTEGSKTLFADAMA). Catalysis depends on S207, which acts as the Charge relay system. Hemolysin-type calcium-binding repeat units follow at residues 372 to 389 (IGSDGNDLIQGGNGADFI), 390 to 407 (EGGKGNDTIRDNSGHNTF), and 410 to 427 (SGHFGNDRVIGYQPTDKL). Ca(2+) is bound by residues D437, D440, and D448.

Belongs to the AB hydrolase superfamily. Lipase family.

The catalysed reaction is a triacylglycerol + H2O = a diacylglycerol + a fatty acid + H(+). In Pseudomonas fluorescens, this protein is Lipase.